The chain runs to 162 residues: Caveolin-2 (162 aa).

Residues 1 to 86 (MGLETEKADV…FEISKYVMYK (86 aa)) are Cytoplasmic-facing. At Tyr19 the chain carries Phosphotyrosine; by SRC. 2 positions are modified to phosphoserine: Ser20 and Ser23. Tyr27 is modified (phosphotyrosine; by SRC). At Ser36 the chain carries Phosphoserine. Residues 87-107 (FLTVFLSIPLAFLAGILFATL) constitute an intramembrane region (helical). At 108-162 (SCLHIWIIMPFVKTCLMVLPSVQTIWKSVTDAIIAPLCTSIGRSFSSVSLQLSHD) the chain is on the cytoplasmic side.

Belongs to the caveolin family. Monomer or homodimer. Interacts with CAV1; the interaction forms a stable heterooligomeric complex that is required for targeting to lipid rafts and for caveolae formation. Tyrosine phosphorylated forms do not form heterooligomers with the Tyr-19-phosphorylated form existing as a monomer or dimer, and the Tyr-27-form as a monomer only. Interacts (tyrosine phosphorylated form) with the SH2 domain-containing proteins, RASA1, NCK1 and SRC. Interacts (tyrosine phosphorylated form) with INSR, the interaction (Tyr-27-phosphorylated form) is increased on insulin stimulation. Interacts (Tyr-19 phosphorylated form) with MAPK1 (phosphorylated form); the interaction, promoted by insulin, leads to nuclear location and MAPK1 activation. Interacts with STAT3; the interaction is increased on insulin-induced tyrosine phosphorylation leading to STAT activation. Phosphorylated on serine and tyrosine residues. CAV1 promotes phosphorylation on Ser-23 which then targets the complex to the plasma membrane, lipid rafts and caveolae. Phosphorylation on Ser-36 appears to modulate mitosis in endothelial cells. Phosphorylation on both Tyr-19 and Tyr-27 is required for insulin-induced 'Ser-727' phosphorylation of STAT3 and its activation. Phosphorylation on Tyr-19 is required for insulin-induced phosphorylation of MAPK1 and DNA binding of STAT3. Tyrosine phosphorylation is induced by both EGF and insulin (By. similarity).

The protein resides in the nucleus. Its subcellular location is the cytoplasm. It localises to the golgi apparatus membrane. The protein localises to the cell membrane. It is found in the membrane. The protein resides in the caveola. In terms of biological role, may act as a scaffolding protein within caveolar membranes. Interacts directly with G-protein alpha subunits and can functionally regulate their activity. Acts as an accessory protein in conjunction with CAV1 in targeting to lipid rafts and driving caveolae formation. The Ser-36 phosphorylated form has a role in modulating mitosis in endothelial cells. Positive regulator of cellular mitogenesis of the MAPK signaling pathway. Required for the insulin-stimulated nuclear translocation and activation of MAPK1 and STAT3, and the subsequent regulation of cell cycle progression. The polypeptide is Caveolin-2 (CAV2) (Saimiri boliviensis boliviensis (Bolivian squirrel monkey)).